The sequence spans 929 residues: Isoleucine--tRNA ligase (929 aa).

The short motif at 57–67 (PYANGNIHVGH) is the 'HIGH' region element. Glu554 provides a ligand contact to L-isoleucyl-5'-AMP. The short motif at 595–599 (KMSKS) is the 'KMSKS' region element. Lys598 serves as a coordination point for ATP. 4 residues coordinate Zn(2+): Cys888, Cys891, Cys908, and Cys911.

Belongs to the class-I aminoacyl-tRNA synthetase family. IleS type 1 subfamily. As to quaternary structure, monomer. Requires Zn(2+) as cofactor.

It localises to the cytoplasm. It catalyses the reaction tRNA(Ile) + L-isoleucine + ATP = L-isoleucyl-tRNA(Ile) + AMP + diphosphate. Catalyzes the attachment of isoleucine to tRNA(Ile). As IleRS can inadvertently accommodate and process structurally similar amino acids such as valine, to avoid such errors it has two additional distinct tRNA(Ile)-dependent editing activities. One activity is designated as 'pretransfer' editing and involves the hydrolysis of activated Val-AMP. The other activity is designated 'posttransfer' editing and involves deacylation of mischarged Val-tRNA(Ile). This chain is Isoleucine--tRNA ligase, found in Streptococcus thermophilus (strain ATCC BAA-491 / LMD-9).